Here is a 305-residue protein sequence, read N- to C-terminus: Probable G-protein coupled receptor 141 (305 aa).

The Extracellular segment spans residues 1–22; it reads MPGHNTSRNSSCDPIVTPHLIS. N-linked (GlcNAc...) asparagine glycosylation is found at N5 and N9. The chain crosses the membrane as a helical span at residues 23–43; it reads LYFIVLIGGLVGVISILFLLV. Over 44-50 the chain is Cytoplasmic; the sequence is KMNTRSV. A helical transmembrane segment spans residues 51–71; that stretch reads TTMAVINLVVVHSVFLLTVPF. Residues 72-89 lie on the Extracellular side of the membrane; that stretch reads RLTYLIKKTWMFGLPFCK. Residues 90–110 form a helical membrane-spanning segment; that stretch reads FVSAMLHIHMYLTFLFYVVIL. Over 111–131 the chain is Cytoplasmic; that stretch reads VTRYLIFFKCKDKVEFYRKLH. Residues 132 to 152 traverse the membrane as a helical segment; that stretch reads AVAASAGMWTLVIVIVVPLVV. Over 153–183 the chain is Extracellular; that stretch reads SRYGIHEEYNEEHCFKFHKELAYTYVKIINY. The chain crosses the membrane as a helical span at residues 184–204; that stretch reads MIVIFVIAVAVILLVFQVFII. Topologically, residues 205-227 are cytoplasmic; the sequence is MLMVQKLRHSLLSHQEFWAQLKN. The chain crosses the membrane as a helical span at residues 228 to 248; sequence LFFIGVILVCFLPYQFFRIYY. Residues 249–267 are Extracellular-facing; that stretch reads LNVVTHSNACNSKVAFYNE. Residues 268-288 traverse the membrane as a helical segment; the sequence is IFLSVTAISCYDLLLFVFGGS. Topologically, residues 289–305 are cytoplasmic; it reads HWFKQKIIGLWNCVLCR.

Belongs to the G-protein coupled receptor 1 family.

It is found in the cell membrane. In terms of biological role, orphan receptor. The chain is Probable G-protein coupled receptor 141 (GPR141) from Homo sapiens (Human).